We begin with the raw amino-acid sequence, 136 residues long: MTERTLVLIKPDGVQRQLVGEIISRIERKGLAIAALELRNVTEELASQHYAEHEGKPFFGSLLEFITSAPVVAAIVEGPRAIAAFRQLAGGTDPVEKATPGTIRGDFGLETQFNLVHGSDSAESAQREIALWFPSA.

Residues lysine 10, phenylalanine 58, arginine 86, threonine 92, arginine 104, and asparagine 114 each contribute to the ATP site. Catalysis depends on histidine 117, which acts as the Pros-phosphohistidine intermediate.

Belongs to the NDK family. In terms of assembly, homotetramer. The cofactor is Mg(2+).

It is found in the cytoplasm. It catalyses the reaction a 2'-deoxyribonucleoside 5'-diphosphate + ATP = a 2'-deoxyribonucleoside 5'-triphosphate + ADP. The catalysed reaction is a ribonucleoside 5'-diphosphate + ATP = a ribonucleoside 5'-triphosphate + ADP. Its function is as follows. Major role in the synthesis of nucleoside triphosphates other than ATP. The ATP gamma phosphate is transferred to the NDP beta phosphate via a ping-pong mechanism, using a phosphorylated active-site intermediate. This Mycobacterium marinum (strain ATCC BAA-535 / M) protein is Nucleoside diphosphate kinase.